A 323-amino-acid polypeptide reads, in one-letter code: tRNA U34 carboxymethyltransferase (323 aa).

Carboxy-S-adenosyl-L-methionine is bound by residues Lys-91, Trp-105, Lys-110, Gly-130, 152–154 (DPT), 181–182 (IE), Met-196, Tyr-200, and Arg-315.

The protein belongs to the class I-like SAM-binding methyltransferase superfamily. CmoB family. Homotetramer.

It carries out the reaction carboxy-S-adenosyl-L-methionine + 5-hydroxyuridine(34) in tRNA = 5-carboxymethoxyuridine(34) in tRNA + S-adenosyl-L-homocysteine + H(+). In terms of biological role, catalyzes carboxymethyl transfer from carboxy-S-adenosyl-L-methionine (Cx-SAM) to 5-hydroxyuridine (ho5U) to form 5-carboxymethoxyuridine (cmo5U) at position 34 in tRNAs. The polypeptide is tRNA U34 carboxymethyltransferase (Shigella flexneri serotype 5b (strain 8401)).